Reading from the N-terminus, the 252-residue chain is tRNA uridine(34) hydroxylase (252 aa).

The Rhodanese domain occupies 129–223 (QGRPVVMLDT…YFEETGGKGF (95 aa)). Cysteine 183 acts as the Cysteine persulfide intermediate in catalysis.

Belongs to the TrhO family.

It carries out the reaction uridine(34) in tRNA + AH2 + O2 = 5-hydroxyuridine(34) in tRNA + A + H2O. In terms of biological role, catalyzes oxygen-dependent 5-hydroxyuridine (ho5U) modification at position 34 in tRNAs. This is tRNA uridine(34) hydroxylase from Bordetella petrii (strain ATCC BAA-461 / DSM 12804 / CCUG 43448).